The following is a 418-amino-acid chain: Probable cysteine desulfurase 2 (418 aa).

Lysine 234 bears the N6-(pyridoxal phosphate)lysine mark. Cysteine 374 serves as the catalytic Cysteine persulfide intermediate.

The protein belongs to the class-V pyridoxal-phosphate-dependent aminotransferase family. Csd subfamily. Requires pyridoxal 5'-phosphate as cofactor.

It carries out the reaction (sulfur carrier)-H + L-cysteine = (sulfur carrier)-SH + L-alanine. Its function is as follows. Catalyzes the removal of elemental sulfur and selenium atoms from L-cysteine, L-cystine, L-selenocysteine, and L-selenocystine to produce L-alanine. The polypeptide is Probable cysteine desulfurase 2 (csd2) (Mycobacterium leprae (strain TN)).